The following is a 636-amino-acid chain: Ubiquitin-activating enzyme E1-like (636 aa).

ATP-binding positions include 28–33, aspartate 52, 60–63, lysine 76, and 121–126; these read GAGGIG, NLNR, and DNLAAR. 2 residues coordinate Zn(2+): cysteine 162 and cysteine 165. The active-site Glycyl thioester intermediate is the cysteine 177. Residues cysteine 435 and cysteine 438 each contribute to the Zn(2+) site. The interval 581–636 is disordered; it reads DGIVILDDDEGEITIDAEPINGSKKRPVDTEISEAPSNKRTKLVNEPTNSDIVELD. Residues 586–595 show a composition bias toward acidic residues; it reads LDDDEGEITI. Residues 619 to 622 carry the Nuclear localization signal motif; that stretch reads KRTK. Over residues 626 to 636 the composition is skewed to polar residues; it reads EPTNSDIVELD.

It belongs to the ubiquitin-activating E1 family. Heterodimer of UBA2 and AOS1. The complex binds SMT3. In terms of processing, multiubiquitinated in vivo.

Its subcellular location is the nucleus. It functions in the pathway protein modification; protein sumoylation. The dimeric enzyme acts as a SMT3 E1 ligase. It mediates ATP-dependent activation of SMT3 and formation of a thioester with a conserved cysteine residue on AOS1. This chain is Ubiquitin-activating enzyme E1-like (UBA2), found in Saccharomyces cerevisiae (strain ATCC 204508 / S288c) (Baker's yeast).